The sequence spans 484 residues: Magnesium transporter MRS2-3 (484 aa).

Disordered stretches follow at residues 1–40 (MRGA…GRKK) and 141–186 (TKPQ…QSLE). Over residues 10-24 (NFSTNPSTPNTGQPT) the composition is skewed to polar residues. Residues 203–275 (ACLEAASSSL…LLDDDEDMAE (73 aa)) adopt a coiled-coil conformation. The segment at 286–320 (LEDSSNSSMNESDTFEVDLPQGDEDDRLPPEFASE) is disordered. The span at 298-311 (DTFEVDLPQGDEDD) shows a compositional bias: acidic residues. A helical transmembrane segment spans residues 416–436 (GVMLTTATLVMSAFIAVAGVF). The short motif at 437-439 (GMN) is the Required for magnesium transport activity element. A helical membrane pass occupies residues 455 to 475 (FIWTVIGGSIGSICLYVGAIG).

Belongs to the CorA metal ion transporter (MIT) (TC 1.A.35.5) family. In terms of tissue distribution, expressed in the whole plant.

It localises to the membrane. Its function is as follows. Magnesium transporter that may mediate the influx of magnesium. This Arabidopsis thaliana (Mouse-ear cress) protein is Magnesium transporter MRS2-3 (MRS2-3).